Consider the following 372-residue polypeptide: NAD(P)H-quinone oxidoreductase subunit 1 (372 aa).

8 consecutive transmembrane segments (helical) span residues 27–47, 97–117, 128–148, 176–196, 204–224, 266–286, 308–328, and 347–367; these read IIWL…GVLV, ILFT…WLIV, VGIG…GLLM, LALS…IDIV, ILSW…ICAL, ILSA…PIPV, SIGI…AILL, and FLLP…LAFP.

Belongs to the complex I subunit 1 family. NDH-1 is composed of at least 11 different subunits.

Its subcellular location is the cellular thylakoid membrane. It catalyses the reaction a plastoquinone + NADH + (n+1) H(+)(in) = a plastoquinol + NAD(+) + n H(+)(out). It carries out the reaction a plastoquinone + NADPH + (n+1) H(+)(in) = a plastoquinol + NADP(+) + n H(+)(out). NDH-1 shuttles electrons from an unknown electron donor, via FMN and iron-sulfur (Fe-S) centers, to quinones in the respiratory and/or the photosynthetic chain. The immediate electron acceptor for the enzyme in this species is believed to be plastoquinone. Couples the redox reaction to proton translocation, and thus conserves the redox energy in a proton gradient. This Prochlorococcus marinus (strain MIT 9301) protein is NAD(P)H-quinone oxidoreductase subunit 1.